Reading from the N-terminus, the 69-residue chain is Large ribosomal subunit protein bL31 (69 aa).

The Zn(2+) site is built by C16, C18, C36, and C39.

This sequence belongs to the bacterial ribosomal protein bL31 family. Type A subfamily. As to quaternary structure, part of the 50S ribosomal subunit. The cofactor is Zn(2+).

Functionally, binds the 23S rRNA. This Kosmotoga olearia (strain ATCC BAA-1733 / DSM 21960 / TBF 19.5.1) protein is Large ribosomal subunit protein bL31.